The primary structure comprises 438 residues: Probable imidazolonepropionase (438 aa).

2 residues coordinate 4-imidazolone-5-propanoate: tyrosine 159 and histidine 192. An N-formimidoyl-L-glutamate-binding site is contributed by tyrosine 159. Fe(3+) is bound at residue histidine 260. Histidine 260 serves as a coordination point for Zn(2+). Residue glutamate 263 participates in 4-imidazolone-5-propanoate binding. Aspartate 334 is a Fe(3+) binding site. Aspartate 334 is a Zn(2+) binding site. An N-formimidoyl-L-glutamate-binding site is contributed by asparagine 336.

It belongs to the metallo-dependent hydrolases superfamily. HutI family. Zn(2+) serves as cofactor. Fe(3+) is required as a cofactor.

It carries out the reaction 4-imidazolone-5-propanoate + H2O = N-formimidoyl-L-glutamate. It participates in amino-acid degradation; L-histidine degradation into L-glutamate; N-formimidoyl-L-glutamate from L-histidine: step 3/3. This chain is Probable imidazolonepropionase (amdhd1), found in Xenopus laevis (African clawed frog).